The chain runs to 654 residues: MNGHLEAEEQQDQRPDQELTGSWGHGPRSTLVRAKAMAPPPPPLAASTPLLHGEFGSYPARGPRFALTLTSQALHIQRLRPKPEARPRGGLVPLAEVSGCCTLRSRSPSDSAAYFCIYTYPRGRRGARRRATRTFRADGAATYEENRAEAQRWATALTCLLRGLPLPGDGEITPDLLPRPPRLLLLVNPFGGRGLAWQWCKNHVLPMISEAGLSFNLIQTERQNHARELVQGLSLSEWDGIVTVSGDGLLHEVLNGLLDRPDWEEAVKMPVGILPCGSGNALAGAVNQHGGFEPALGLDLLLNCSLLLCRGGGHPLDLLSVTLASGSRCFSFLSVAWGFVSDVDIQSERFRALGSARFTLGTVLGLATLHTYRGRLSYLPATVEPASPTPAHSLPRAKSELTLTPDPAPPMAHSPLHRSVSDLPLPLPQPALASPGSPEPLPILSLNGGGPELAGDWGGAGDAPLSPDPLLSSPPGSPKAALHSPVSEGAPVIPPSSGLPLPTPDARVGASTCGPPDHLLPPLGTPLPPDWVTLEGDFVLMLAISPSHLGADLVAAPHARFDDGLVHLCWVRSGISRAALLRLFLAMERGSHFSLGCPQLGYAAARAFRLEPLTPRGVLTVDGEQVEYGPLQAQMHPGIGTLLTGPPGCPGREP.

Residues 1-17 show a composition bias toward basic and acidic residues; the sequence is MNGHLEAEEQQDQRPDQ. Positions 1–28 are disordered; it reads MNGHLEAEEQQDQRPDQELTGSWGHGPR. The segment at 1 to 175 is required for binding to sulfatide and phosphoinositides and for membrane localizatione; the sequence is MNGHLEAEEQ…LPGDGEITPD (175 aa). The Nuclear localization signal signature appears at 122–130; that stretch reads RGRRGARRR. Residues 178–325 form the DAGKc domain; sequence PRPPRLLLLV…LDLLSVTLAS (148 aa). Residues 188–190 and 220–224 contribute to the ATP site; these read NPF and TERQN. 245-248 contacts substrate; the sequence is SGDG. Catalysis depends on D247, which acts as the Proton donor/acceptor. ATP contacts are provided by residues E252 and 277-279; that span reads GSG. D344 lines the substrate pocket. R351 and R357 together coordinate ATP. Phosphoserine; by MAPK is present on S387. 2 positions are modified to phosphoserine: S393 and S399. The disordered stretch occupies residues 400-509; it reads ELTLTPDPAP…PLPTPDARVG (110 aa). The short motif at 416-425 is the Nuclear export signal element; it reads LHRSVSDLPL. Phosphoserine; by PKD is present on residues S419 and S421. Over residues 447 to 461 the composition is skewed to gly residues; the sequence is NGGGPELAGDWGGAG. A compositionally biased stretch (low complexity) spans 462 to 482; the sequence is DAPLSPDPLLSSPPGSPKAAL. Phosphoserine is present on S477. Residue T614 is modified to Phosphothreonine; by MAPK. 622 to 624 is an ATP binding site; sequence DGE.

As to quaternary structure, interacts with histone H3. Interacts with HDAC1, HDAC2, MBD2 and SIN3A. Interacts with EEF1A1; the interaction enhances SPHK2 kinase activity. Interacts with PHB2. It depends on Mg(2+) as a cofactor. Phosphorylated by PKD on Ser-419 and Ser-421 upon PMA treatment. Phosphorylation induces export from the nucleus to the cytoplasm. Phosphorylated by MAPK1 and MAPK2 at Ser-387 and Thr-614, phosphorylation is induced by agonists such as EGF and PMA and increases kinase activity. In terms of processing, cleaved by CASP1 in apoptotic cells. The truncated form is released from cells. As to expression, mainly expressed in adult kidney, liver, and brain. Expressed in cerebral cortex and hippocampus (at protein level). Isoform 1 is the predominant form expressed in most tissues.

The protein localises to the cytoplasm. It is found in the nucleus. Its subcellular location is the endoplasmic reticulum. It localises to the mitochondrion inner membrane. The protein resides in the lysosome membrane. It catalyses the reaction a sphingoid base + ATP = a sphingoid 1-phosphate + ADP + H(+). It carries out the reaction sphing-4-enine + ATP = sphing-4-enine 1-phosphate + ADP + H(+). The enzyme catalyses sphinganine + ATP = sphinganine 1-phosphate + ADP + H(+). The catalysed reaction is (4R)-hydroxysphinganine + ATP = (4R)-hydroxysphinganine 1-phosphate + ADP + H(+). Inhibited by sulfatide. Kinase activity is increased by phosphorylation by MAPK2 upon PMA or EGF treatments. In terms of biological role, catalyzes the phosphorylation of sphingosine to form sphingosine-1-phosphate (SPP), a lipid mediator with both intra- and extracellular functions. Also acts on D-erythro-dihydrosphingosine, D-erythro-sphingosine and L-threo-dihydrosphingosine. Binds phosphoinositides. In contrast to prosurvival SPHK1, has a positive effect on intracellular ceramide levels, inhibits cells growth and enhances apoptosis. In mitochondria, is important for cytochrome-c oxidase assembly and mitochondrial respiration. The SPP produced in mitochondria binds PHB2 and modulates the regulation via PHB2 of complex IV assembly and respiration. In nucleus, plays a role in epigenetic regulation of gene expression. Interacts with HDAC1 and HDAC2 and, through SPP production, inhibits their enzymatic activity, preventing the removal of acetyl groups from lysine residues with histones. Up-regulates acetylation of histone H3-K9, histone H4-K5 and histone H2B-K12. In nucleus, may have an inhibitory effect on DNA synthesis and cell cycle. In mast cells, is the main regulator of SPP production which mediates calcium influx, NF-kappa-B activation, cytokine production, such as TNF and IL6, and degranulation of mast cells. In dopaminergic neurons, is involved in promoting mitochondrial functions regulating ATP and ROS levels. Also involved in the regulation of glucose and lipid metabolism. This is Sphingosine kinase 2 from Homo sapiens (Human).